Here is a 563-residue protein sequence, read N- to C-terminus: Endoglucanase B (563 aa).

The segment at residues 1 to 27 is a signal peptide (or 31); it reads MKKFLVLLIALIMIATLLVVPGVQTSA. The Proton donor role is filled by E204. The active-site Nucleophile is the E363. A disordered region spans residues 476–495; that stretch reads SVTPSPSATPSPTTITAPPT. The Dockerin domain occupies 496 to 562; the sequence is DTVTYGDVNG…VLRSISELPY (67 aa).

It belongs to the glycosyl hydrolase 5 (cellulase A) family.

It carries out the reaction Endohydrolysis of (1-&gt;4)-beta-D-glucosidic linkages in cellulose, lichenin and cereal beta-D-glucans.. This enzyme catalyzes the endohydrolysis of 1,4-beta-glucosidic linkages in cellulose, lichenin and cereal beta-D-glucans. The polypeptide is Endoglucanase B (celB) (Acetivibrio thermocellus (strain ATCC 27405 / DSM 1237 / JCM 9322 / NBRC 103400 / NCIMB 10682 / NRRL B-4536 / VPI 7372) (Clostridium thermocellum)).